A 144-amino-acid polypeptide reads, in one-letter code: Probable transcription termination protein NusA (144 aa).

A KH domain is found at arginine 101–glutamine 144.

The protein belongs to the NusA family.

The protein localises to the cytoplasm. Participates in transcription termination. The polypeptide is Probable transcription termination protein NusA (Thermoplasma acidophilum (strain ATCC 25905 / DSM 1728 / JCM 9062 / NBRC 15155 / AMRC-C165)).